Here is a 95-residue protein sequence, read N- to C-terminus: Protein YY1 (95 aa).

Residues 1–26 form the signal peptide; it reads MAVTRTALLVVLVAGAMTMTMRGAEA. 4 disulfides stabilise this stretch: C31-C72, C41-C61, C62-C87, and C74-C94.

It belongs to the A9/FIL1 family. Anther.

The protein localises to the secreted. This Oryza sativa subsp. japonica (Rice) protein is Protein YY1.